The primary structure comprises 153 residues: LWWLFRDNLLPSVTKFVGYARTKLTVAELKEKCHPYMKVDAAHEEKYDEFWALNFYVAGSYDGRRDFELLNQEIGKFEVGKTANRLFYLRLPPSVFETVTVHIRNTCMGLKGWNRIIVEKPFGRDADSSNKLSEHLAKLFTEDQLYRIDHYLG.

R21 and K120 together coordinate NADP(+). K120 provides a ligand contact to D-glucose 6-phosphate.

It belongs to the glucose-6-phosphate dehydrogenase family.

The protein resides in the cytoplasm. The protein localises to the cytosol. The catalysed reaction is D-glucose 6-phosphate + NADP(+) = 6-phospho-D-glucono-1,5-lactone + NADPH + H(+). It functions in the pathway carbohydrate degradation; pentose phosphate pathway; D-ribulose 5-phosphate from D-glucose 6-phosphate (oxidative stage): step 1/3. Cytosolic glucose-6-phosphate dehydrogenase that catalyzes the first and rate-limiting step of the oxidative branch within the pentose phosphate pathway/shunt, an alternative route to glycolysis for the dissimilation of carbohydrates and a major source of reducing power and metabolic intermediates for fatty acid and nucleic acid biosynthetic processes. This chain is Glucose-6-phosphate 1-dehydrogenase (ZW), found in Culex pipiens (House mosquito).